Reading from the N-terminus, the 841-residue chain is DNA mismatch repair protein MutS (841 aa).

596 to 603 provides a ligand contact to ATP; sequence GPNMSGKS.

The protein belongs to the DNA mismatch repair MutS family.

Its function is as follows. This protein is involved in the repair of mismatches in DNA. It is possible that it carries out the mismatch recognition step. This protein has a weak ATPase activity. This is DNA mismatch repair protein MutS from Acholeplasma laidlawii (strain PG-8A).